The primary structure comprises 277 residues: Inorganic pyrophosphatase (277 aa).

Arg80 contacts diphosphate. 3 residues coordinate Mg(2+): Asp117, Asp122, and Asp154.

The protein belongs to the PPase family. Mg(2+) serves as cofactor.

It localises to the cytoplasm. The enzyme catalyses diphosphate + H2O = 2 phosphate + H(+). Its function is as follows. Involved in osmoadaptation. The polypeptide is Inorganic pyrophosphatase (IPP1) (Encephalitozoon cuniculi (strain GB-M1) (Microsporidian parasite)).